The primary structure comprises 227 residues: Peroxiredoxin 1 (227 aa).

A Thioredoxin domain is found at 6 to 161 (PLIGEKFPEM…ILRLIKSLQM (156 aa)). Cys-48 (cysteine sulfenic acid (-SOH) intermediate) is an active-site residue. Substrate is bound at residue Arg-124.

It belongs to the peroxiredoxin family. Prx6 subfamily. Homodecamer. Pentamer of dimers that assemble into a ring structure.

Its subcellular location is the cytoplasm. It carries out the reaction a hydroperoxide + [thioredoxin]-dithiol = an alcohol + [thioredoxin]-disulfide + H2O. Its function is as follows. Thiol-specific peroxidase that catalyzes the reduction of hydrogen peroxide and organic hydroperoxides to water and alcohols, respectively. Plays a role in cell protection against oxidative stress by detoxifying peroxides. This Picrophilus torridus (strain ATCC 700027 / DSM 9790 / JCM 10055 / NBRC 100828 / KAW 2/3) protein is Peroxiredoxin 1.